Consider the following 417-residue polypeptide: UPF0597 protein FMG_0209 (417 aa).

Belongs to the UPF0597 family.

This is UPF0597 protein FMG_0209 from Finegoldia magna (strain ATCC 29328 / DSM 20472 / WAL 2508) (Peptostreptococcus magnus).